The primary structure comprises 74 residues: U19-theraphotoxin-Cg1a (74 aa).

The N-terminal stretch at 1–7 is a signal peptide; the sequence is IMFVWAS. A propeptide spanning residues 8–36 is cleaved from the precursor; it reads AAEVEERGSDQRDSPASLKSMETIFQSEQ. Intrachain disulfides connect cysteine 39–cysteine 53, cysteine 46–cysteine 58, and cysteine 52–cysteine 66.

Belongs to the neurotoxin 10 (Hwtx-1) family. 38 (Jztx-33) subfamily. In terms of tissue distribution, expressed by the venom gland.

The protein resides in the secreted. Probable ion channel inhibitor. The chain is U19-theraphotoxin-Cg1a from Chilobrachys guangxiensis (Chinese earth tiger tarantula).